Consider the following 153-residue polypeptide: METQRASLCLGRWSLWLLLLGLVVPSASAQALSYREAVLRAVDRLNEQSSEANLYRLLELDQPPKADEDPGTPKPVSFTVKETVCPRPTRQPPELCDFKENGRVKQCVGTVTLKEIRGNFDITCNQLQSVRIIDLLWRVRRPQKPKFVTVWVR.

A signal peptide spans 1–29; sequence METQRASLCLGRWSLWLLLLGLVVPSASA. Residue Q30 is modified to Pyrrolidone carboxylic acid. Positions 30–130 are excised as a propeptide; that stretch reads QALSYREAVL…DITCNQLQSV (101 aa). Residues 61–80 are disordered; the sequence is DQPPKADEDPGTPKPVSFTV. Intrachain disulfides connect C85–C96 and C107–C124.

Belongs to the cathelicidin family.

It is found in the secreted. Exerts antimicrobial activity against both Gram-positive and negative bacteria at concentrations of 2-16 micro molar. Its activity appears to be mediated by its ability to damage bacterial membranes. This is Antibacterial peptide PMAP-23 (PMAP23) from Sus scrofa (Pig).